A 609-amino-acid chain; its full sequence is Large ribosomal subunit assembly factor BipA (609 aa).

The tr-type G domain occupies 3–198 (QNIRNIAIIA…AIIKYAPAPN (196 aa)). Residues 15 to 20 (DHGKTT) and 128 to 131 (NKID) each bind GTP.

Belongs to the TRAFAC class translation factor GTPase superfamily. Classic translation factor GTPase family. BipA subfamily. As to quaternary structure, monomer.

Its subcellular location is the cytoplasm. It catalyses the reaction GTP + H2O = GDP + phosphate + H(+). In terms of biological role, a 50S ribosomal subunit assembly protein with GTPase activity, required for 50S subunit assembly at low temperatures, may also play a role in translation. Binds GTP and analogs. Binds the 70S ribosome between the 30S and 50S subunits, in a similar position as ribosome-bound EF-G; it contacts a number of ribosomal proteins, both rRNAs and the A-site tRNA. This Buchnera aphidicola subsp. Schizaphis graminum (strain Sg) protein is Large ribosomal subunit assembly factor BipA.